The primary structure comprises 233 residues: MIVPPDSAGFPEAPAIFAGEDLLCVRGERAIFAGLSFRLAPGGALLLLGPNGSGKSSLLRLLALLLRPAAGRLTWGGQAVAADPEAHGGRCHYVGHLDAIKPVLALRENVAFWAKLAGAGETHVDRALKAFALAPLATIPGRMLSAGQKRRANLARLIAAPAPLWLLDEPTTALDRASIGVLEDLIARHRAAGGMVVVSTHQDITLPGATVLALDHFAPDPSRAAGLFLEDEG.

Positions 17–233 constitute an ABC transporter domain; that stretch reads FAGEDLLCVR…AAGLFLEDEG (217 aa). 49–56 provides a ligand contact to ATP; sequence GPNGSGKS.

Belongs to the ABC transporter superfamily. CcmA exporter (TC 3.A.1.107) family. The complex is composed of two ATP-binding proteins (CcmA) and two transmembrane proteins (CcmB).

It is found in the cell inner membrane. The catalysed reaction is heme b(in) + ATP + H2O = heme b(out) + ADP + phosphate + H(+). Functionally, part of the ABC transporter complex CcmAB involved in the biogenesis of c-type cytochromes; once thought to export heme, this seems not to be the case, but its exact role is uncertain. Responsible for energy coupling to the transport system. The chain is Cytochrome c biogenesis ATP-binding export protein CcmA from Rhodospirillum rubrum (strain ATCC 11170 / ATH 1.1.1 / DSM 467 / LMG 4362 / NCIMB 8255 / S1).